The sequence spans 651 residues: Histone-arginine methyltransferase CARM1 (651 aa).

The interval 28–139 (ATVSVFPGAR…GHTLERSVFS (112 aa)) is interaction with C9orf72. In terms of domain architecture, SAM-dependent MTase PRMT-type spans 147–454 (AVQYFQFYGY…KRQSYDISIV (308 aa)). Positions 160, 169, 193, and 215 each coordinate S-adenosyl-L-methionine. Residue Ser217 is modified to Phosphoserine. A Glycyl lysine isopeptide (Lys-Gly) (interchain with G-Cter in ubiquitin) cross-link involves residue Lys228. S-adenosyl-L-methionine contacts are provided by Glu244 and Ser272. The required for nuclear translocation stretch occupies residues 347-380 (RILMAKSVKYTVNFLEAKEGDLHRIEIPFKFHML). The transactivation domain stretch occupies residues 500–651 (TGSTYNLSSG…IPTNTMHYGS (152 aa)). Arg551 is subject to Dimethylated arginine. The interval 581 to 617 (RSSYQWGPGRLRGHAGSSVPMTCPTGSSGAQGGGGSS) is disordered.

This sequence belongs to the class I-like SAM-binding methyltransferase superfamily. Protein arginine N-methyltransferase family. Homodimer. Interacts with NR1H4. Interacts with SNRPC. Interacts with the C-terminus of NCOA2/GRIP1, NCO3/ACTR and NCOA1/SRC1. Part of a complex consisting of CARM1, EP300/P300 and NCOA2/GRIP1. Interacts with FLII, TP53, myogenic factor MEF2, EP300/P300, TRIM24, CREBBP and CTNNB1. Interacts with RELA. Identified in a complex containing CARM1, TRIM24 and NCOA2/GRIP1. Interacts with NCOA3/SRC3. Interacts with SKP2. Interacts (via PH domain-like fold) with C9orf72. Interacts with PARP1; promoting PARP1 recruimtent to replication forks. Post-translationally, auto-methylated on Arg-551. Methylation enhances transcription coactivator activity. Methylation is required for its role in the regulation of pre-mRNA alternative splicing. Phosphorylation at Ser-217 interferes with S-adenosyl-L-methionine binding and strongly reduces methyltransferase activity. Phosphorylation at Ser-217 is strongly increased during mitosis, and decreases rapidly to a very low, basal level after entry into the G1 phase of the cell cycle. Phosphorylation at Ser-217 may promote location in the cytosol. In terms of processing, ubiquitinated by E3 ubiquitin-protein ligase complex containing FBXO9 at Lys-228; leading to proteasomal degradation. Isoform 1 is expressed at low levels in brain, liver and testis. In terms of tissue distribution, isoform 2 is highly expressed in brain, liver, skeletal muscle and testis. As to expression, isoform 3 is highly expressed in spleen, liver and kidney. Isoform 4 is expressed in spleen, liver and kidney.

Its subcellular location is the nucleus. It localises to the cytoplasm. The protein localises to the chromosome. It catalyses the reaction L-arginyl-[protein] + 2 S-adenosyl-L-methionine = N(omega),N(omega)-dimethyl-L-arginyl-[protein] + 2 S-adenosyl-L-homocysteine + 2 H(+). Its activity is regulated as follows. Methylation of H3R17 (H3R17me) by CARM1 is stimulated by preacetylation of H3 'Lys-18' (H3K18ac) H3 'Lys-23' (H3K23ac) by EP300 and blocked by citrullination of H3 'Arg-17' (H3R17ci) by PADI4. Its function is as follows. Methylates (mono- and asymmetric dimethylation) the guanidino nitrogens of arginyl residues in several proteins involved in DNA packaging, transcription regulation, pre-mRNA splicing, and mRNA stability. Recruited to promoters upon gene activation together with histone acetyltransferases from EP300/P300 and p160 families, methylates histone H3 at 'Arg-17' (H3R17me), forming mainly asymmetric dimethylarginine (H3R17me2a), leading to activation of transcription via chromatin remodeling. During nuclear hormone receptor activation and TCF7L2/TCF4 activation, acts synergically with EP300/P300 and either one of the p160 histone acetyltransferases NCOA1/SRC1, NCOA2/GRIP1 and NCOA3/ACTR or CTNNB1/beta-catenin to activate transcription. During myogenic transcriptional activation, acts together with NCOA3/ACTR as a coactivator for MEF2C. During monocyte inflammatory stimulation, acts together with EP300/P300 as a coactivator for NF-kappa-B. Acts as a coactivator for PPARG, promotes adipocyte differentiation and the accumulation of brown fat tissue. Plays a role in the regulation of pre-mRNA alternative splicing by methylation of splicing factors. Also seems to be involved in p53/TP53 transcriptional activation. Methylates EP300/P300, both at 'Arg-2142', which may loosen its interaction with NCOA2/GRIP1, and at 'Arg-580' and 'Arg-604' in the KIX domain, which impairs its interaction with CREB and inhibits CREB-dependent transcriptional activation. Also methylates arginine residues in RNA-binding proteins PABPC1, ELAVL1 and ELAV4, which may affect their mRNA-stabilizing properties and the half-life of their target mRNAs. Acts as a transcriptional coactivator of ACACA/acetyl-CoA carboxylase by enriching H3R17 methylation at its promoter, thereby positively regulating fatty acid synthesis. Independently of its methyltransferase activity, involved in replication fork progression: promotes PARP1 recruitment to replication forks, leading to poly-ADP-ribosylation of chromatin at replication forks and reduced fork speed. In terms of biological role, isoform 3 specifically affects pre-mRNA splicing. This activity is independent from methyltransferase activity. The polypeptide is Histone-arginine methyltransferase CARM1 (Carm1) (Rattus norvegicus (Rat)).